The chain runs to 167 residues: NADH-quinone oxidoreductase subunit B 1 (167 aa).

4 residues coordinate [4Fe-4S] cluster: cysteine 38, cysteine 39, cysteine 104, and cysteine 133.

The protein belongs to the complex I 20 kDa subunit family. As to quaternary structure, NDH-1 is composed of 14 different subunits. Subunits NuoB, C, D, E, F, and G constitute the peripheral sector of the complex. [4Fe-4S] cluster serves as cofactor.

It is found in the cell membrane. It catalyses the reaction a quinone + NADH + 5 H(+)(in) = a quinol + NAD(+) + 4 H(+)(out). Functionally, NDH-1 shuttles electrons from NADH, via FMN and iron-sulfur (Fe-S) centers, to quinones in the respiratory chain. The immediate electron acceptor for the enzyme in this species is believed to be ubiquinone. Couples the redox reaction to proton translocation (for every two electrons transferred, four hydrogen ions are translocated across the cytoplasmic membrane), and thus conserves the redox energy in a proton gradient. This chain is NADH-quinone oxidoreductase subunit B 1, found in Roseiflexus castenholzii (strain DSM 13941 / HLO8).